A 593-amino-acid polypeptide reads, in one-letter code: MIDFLGGWKRTHYCGALTAGDIGKEVVLMGWAHRRRDHGGLIFVDLRDREGLAQVVFDPDNSPAAHKKAEAIRNEYVVAIRGKVIPRPDGTVNANLKTGEVEVLVSECKMLNRSKALPFTLDDYVDVAENLRLKHRYLDLRRPVLQENLILRSKVAQITRQYLTGNGFLELETPFLTKSTPEGARDFLVPSRINRGEFYALPQSPQLFKQILMVSGFDRYFQVVRCFRDEDLRADRQPEFTQIDCEMSFIDREDIITVMEGLIARIFTETKGATVNLPIPRMTYAESIRRFGVDNPDLRFGLELVELSDIVKNAGFKVFADVVAGGGIVKGLNAKGCGGMSRKEIDDLTEFAKIYGAKGLAYVKMTAEGWQSPIAKFFTAEEISAMDKAFDAKEGDLLLFVADKPKVVNDSLGKLRNHLAKSLGLLDKDTFNFVWITDFPLLEWDEEEKRWAAVHHPFTAPMDEDLEYVESDPGRCRAKAYDLVLNGNEIGGGSIRIHQEKIQSLMFKMLGHSEEDARTKFGFLLDAMDYGAPPHGGIAFGLDRLIMLLTGSDSIRDVIAFPKTQKGACLMSEAPSAVDMKQLRELGLKTVVK.

Position 182 (glutamate 182) interacts with L-aspartate. Positions 206–209 are aspartate; it reads QLFK. Arginine 228 contacts L-aspartate. ATP-binding positions include 228-230 and glutamine 237; that span reads RDE. Residue histidine 455 participates in L-aspartate binding. Glutamate 489 serves as a coordination point for ATP. Arginine 496 serves as a coordination point for L-aspartate. 541–544 is an ATP binding site; it reads GLDR.

It belongs to the class-II aminoacyl-tRNA synthetase family. Type 1 subfamily. As to quaternary structure, homodimer.

It is found in the cytoplasm. The catalysed reaction is tRNA(Asx) + L-aspartate + ATP = L-aspartyl-tRNA(Asx) + AMP + diphosphate. In terms of biological role, aspartyl-tRNA synthetase with relaxed tRNA specificity since it is able to aspartylate not only its cognate tRNA(Asp) but also tRNA(Asn). Reaction proceeds in two steps: L-aspartate is first activated by ATP to form Asp-AMP and then transferred to the acceptor end of tRNA(Asp/Asn). The polypeptide is Aspartate--tRNA(Asp/Asn) ligase (Geotalea uraniireducens (strain Rf4) (Geobacter uraniireducens)).